Reading from the N-terminus, the 241-residue chain is Probable transcriptional regulatory protein CV_3123 (241 aa).

This sequence belongs to the TACO1 family.

It localises to the cytoplasm. The sequence is that of Probable transcriptional regulatory protein CV_3123 from Chromobacterium violaceum (strain ATCC 12472 / DSM 30191 / JCM 1249 / CCUG 213 / NBRC 12614 / NCIMB 9131 / NCTC 9757 / MK).